Reading from the N-terminus, the 438-residue chain is GTPase Obg (438 aa).

Residues 1–159 (MAFRDVLNIE…RRVRLELRLI (159 aa)) enclose the Obg domain. The region spanning 160 to 332 (ADVGLVGYPN…LRETLFQLLP (173 aa)) is the OBG-type G domain. ATP contacts are provided by residues 166-173 (GYPNAGKS), 191-195 (FTTLS), 219-222 (DIPG), 285-288 (NKVE), and 313-315 (SAK). Residues Ser-173 and Thr-193 each contribute to the Mg(2+) site. The OCT domain maps to 357–435 (IVFREDAPAK…IGTFRFEYFD (79 aa)).

Belongs to the TRAFAC class OBG-HflX-like GTPase superfamily. OBG GTPase family. In terms of assembly, monomer. The cofactor is Mg(2+).

It is found in the cytoplasm. In terms of biological role, an essential GTPase which binds GTP, GDP and possibly (p)ppGpp with moderate affinity, with high nucleotide exchange rates and a fairly low GTP hydrolysis rate. Plays a role in control of the cell cycle, stress response, ribosome biogenesis and in those bacteria that undergo differentiation, in morphogenesis control. The protein is GTPase Obg of Deinococcus radiodurans (strain ATCC 13939 / DSM 20539 / JCM 16871 / CCUG 27074 / LMG 4051 / NBRC 15346 / NCIMB 9279 / VKM B-1422 / R1).